Here is a 233-residue protein sequence, read N- to C-terminus: Adapter protein MecA (233 aa).

The protein belongs to the MecA family. As to quaternary structure, homodimer.

In terms of biological role, enables the recognition and targeting of unfolded and aggregated proteins to the ClpC protease or to other proteins involved in proteolysis. The protein is Adapter protein MecA of Lactococcus lactis subsp. lactis (strain IL1403) (Streptococcus lactis).